The following is a 243-amino-acid chain: Phosphoribosyl isomerase A (243 aa).

Asp-10 functions as the Proton acceptor in the catalytic mechanism. Asp-129 functions as the Proton donor in the catalytic mechanism.

It belongs to the HisA/HisF family.

It localises to the cytoplasm. The enzyme catalyses 1-(5-phospho-beta-D-ribosyl)-5-[(5-phospho-beta-D-ribosylamino)methylideneamino]imidazole-4-carboxamide = 5-[(5-phospho-1-deoxy-D-ribulos-1-ylimino)methylamino]-1-(5-phospho-beta-D-ribosyl)imidazole-4-carboxamide. It carries out the reaction N-(5-phospho-beta-D-ribosyl)anthranilate = 1-(2-carboxyphenylamino)-1-deoxy-D-ribulose 5-phosphate. The protein operates within amino-acid biosynthesis; L-histidine biosynthesis; L-histidine from 5-phospho-alpha-D-ribose 1-diphosphate: step 4/9. It functions in the pathway amino-acid biosynthesis; L-tryptophan biosynthesis; L-tryptophan from chorismate: step 3/5. In terms of biological role, involved in both the histidine and tryptophan biosynthetic pathways. This Mycobacteroides abscessus (strain ATCC 19977 / DSM 44196 / CCUG 20993 / CIP 104536 / JCM 13569 / NCTC 13031 / TMC 1543 / L948) (Mycobacterium abscessus) protein is Phosphoribosyl isomerase A.